Reading from the N-terminus, the 494-residue chain is BTB/POZ domain and ankyrin repeat-containing protein NH5.2 (494 aa).

The BTB domain maps to 25-131 (SDVAFSVEGR…LYSGQASVAA (107 aa)). The tract at residues 60–95 (NHQPPPPPPPPLNWPTAGGGGGGSGGGGRGGAGGGG) is disordered. Positions 61–72 (HQPPPPPPPPLN) are enriched in pro residues. The span at 76-95 (AGGGGGGSGGGGRGGAGGGG) shows a compositional bias: gly residues. Residues 137-151 (LPGCGARGCWHTRCG) form a C2HC NPR-type zinc finger. Zn(2+) contacts are provided by Cys-140, Cys-145, His-147, and Cys-150. ANK repeat units lie at residues 275-303 (NKIRRMRRALDAADIELVKLMVMGEGLDL), 304-334 (DDALAVHYAVQHCNRDVVKALLELGAADVNS), 339-368 (TGKTALHLAAEMVSPDMVSVLLDHHADPNS), and 372-406 (DGVTPLDVLRSLTSEFLFKGAVPGLTHIEPNKLRL). 2 disordered regions span residues 421 to 443 (DDGAPVTGGEAGGSDGGNFPRSD) and 471 to 494 (GEGRKSNNGRGSPPPAMYFPNGFA).

It belongs to the plant 'ANKYRIN-BTB/POZ' family. 'NOOT-BOP-COCH-like' (NBCL) subfamily. As to quaternary structure, homodimer. Interacts with TGAL5, TGAL7, TGAL8 and TGAL9.

It localises to the nucleus. The protein resides in the cytoplasm. It functions in the pathway protein modification; protein ubiquitination. May act as a substrate-specific adapter of an E3 ubiquitin-protein ligase complex (CUL3-RBX1-BTB) which mediates the ubiquitination and subsequent proteasomal degradation of target proteins. Transcriptional co-regulator involved in the promotion of leaf and floral meristem fate and determinacy. Required for the abscission of senescent organs, probably by regulating the cell wall disorganization in abscission zones (AZs, e.g. pulvini at the base of leaves). In Oryza sativa subsp. japonica (Rice), this protein is BTB/POZ domain and ankyrin repeat-containing protein NH5.2.